Here is a 177-residue protein sequence, read N- to C-terminus: ATP synthase subunit b (177 aa).

A helical membrane pass occupies residues 29 to 49 (FFFVLAIFLIVLAVIGTFVVP).

Belongs to the ATPase B chain family. As to quaternary structure, F-type ATPases have 2 components, F(1) - the catalytic core - and F(0) - the membrane proton channel. F(1) has five subunits: alpha(3), beta(3), gamma(1), delta(1), epsilon(1). F(0) has three main subunits: a(1), b(2) and c(10-14). The alpha and beta chains form an alternating ring which encloses part of the gamma chain. F(1) is attached to F(0) by a central stalk formed by the gamma and epsilon chains, while a peripheral stalk is formed by the delta and b chains.

It is found in the cell membrane. In terms of biological role, f(1)F(0) ATP synthase produces ATP from ADP in the presence of a proton or sodium gradient. F-type ATPases consist of two structural domains, F(1) containing the extramembraneous catalytic core and F(0) containing the membrane proton channel, linked together by a central stalk and a peripheral stalk. During catalysis, ATP synthesis in the catalytic domain of F(1) is coupled via a rotary mechanism of the central stalk subunits to proton translocation. Its function is as follows. Component of the F(0) channel, it forms part of the peripheral stalk, linking F(1) to F(0). This is ATP synthase subunit b from Mycolicibacterium paratuberculosis (strain ATCC BAA-968 / K-10) (Mycobacterium paratuberculosis).